Reading from the N-terminus, the 88-residue chain is Small ribosomal subunit protein uS17 (88 aa).

This sequence belongs to the universal ribosomal protein uS17 family. As to quaternary structure, part of the 30S ribosomal subunit.

Functionally, one of the primary rRNA binding proteins, it binds specifically to the 5'-end of 16S ribosomal RNA. This chain is Small ribosomal subunit protein uS17, found in Brevibacillus brevis (strain 47 / JCM 6285 / NBRC 100599).